The sequence spans 309 residues: Taste receptor type 2 member 114 (309 aa).

At 1-7 (MLGAMEG) the chain is on the extracellular side. Residues 8-28 (VLLSVATSEALLGIVGNTFIA) traverse the membrane as a helical segment. The Cytoplasmic portion of the chain corresponds to 29-43 (LVNCMDCTRNKNLYN). The helical transmembrane segment at 44–64 (IGFILTGLAISRICLVWILIT) threads the bilayer. The Extracellular portion of the chain corresponds to 65–87 (EAYIKIFSPQLLSPINIIELISY). A helical membrane pass occupies residues 88-108 (LWIITSQLNVWFATSLSIFYF). Residues 109–127 (LKIANFSHHIFLWLKRRIN) are Cytoplasmic-facing. A helical membrane pass occupies residues 128-148 (IVFAFLIGCLLMSWLFSFPVV). The Extracellular segment spans residues 149-182 (VKMVKDKKMLYINSSWQIHMKKSELIINYVFTNG). An N-linked (GlcNAc...) asparagine glycan is attached at asparagine 161. The helical transmembrane segment at 183 to 203 (GVFLLFIIMLIVCFLLIISLW) threads the bilayer. Topologically, residues 204–233 (RHSKWMQSNESGFRDLNTEVHVKTIKVLLS) are cytoplasmic. A helical transmembrane segment spans residues 234–254 (FIILFILHLIGITINVICLLV). Over 255–259 (PENNL) the chain is Extracellular. A helical transmembrane segment spans residues 260-280 (LFVFGLTIAFLYPCCHSLILI). Topologically, residues 281–309 (LANSRLKRCFVRILQQLMCSEEGKEFRNT) are cytoplasmic.

Belongs to the G-protein coupled receptor T2R family.

The protein localises to the membrane. Putative taste receptor which may play a role in the perception of bitterness. The protein is Taste receptor type 2 member 114 of Rattus norvegicus (Rat).